The chain runs to 432 residues: Glutamyl-tRNA reductase (432 aa).

Substrate is bound by residues 49–52 (TCNR), Ser-107, 112–114 (ETQ), and Gln-118. Cys-50 acts as the Nucleophile in catalysis. An NADP(+)-binding site is contributed by 186–191 (GAGEMG).

This sequence belongs to the glutamyl-tRNA reductase family. Homodimer.

It carries out the reaction (S)-4-amino-5-oxopentanoate + tRNA(Glu) + NADP(+) = L-glutamyl-tRNA(Glu) + NADPH + H(+). Its pathway is porphyrin-containing compound metabolism; protoporphyrin-IX biosynthesis; 5-aminolevulinate from L-glutamyl-tRNA(Glu): step 1/2. Its function is as follows. Catalyzes the NADPH-dependent reduction of glutamyl-tRNA(Glu) to glutamate 1-semialdehyde (GSA). The polypeptide is Glutamyl-tRNA reductase (Campylobacter jejuni subsp. jejuni serotype O:6 (strain 81116 / NCTC 11828)).